Here is a 179-residue protein sequence, read N- to C-terminus: Large ribosomal subunit protein uL10 (179 aa).

Belongs to the universal ribosomal protein uL10 family. In terms of assembly, part of the ribosomal stalk of the 50S ribosomal subunit. The N-terminus interacts with L11 and the large rRNA to form the base of the stalk. The C-terminus forms an elongated spine to which L12 dimers bind in a sequential fashion forming a multimeric L10(L12)X complex.

Functionally, forms part of the ribosomal stalk, playing a central role in the interaction of the ribosome with GTP-bound translation factors. The chain is Large ribosomal subunit protein uL10 from Mycolicibacterium vanbaalenii (strain DSM 7251 / JCM 13017 / BCRC 16820 / KCTC 9966 / NRRL B-24157 / PYR-1) (Mycobacterium vanbaalenii).